The following is an 879-amino-acid chain: Alanine--tRNA ligase (879 aa).

His567, His571, Cys669, and His673 together coordinate Zn(2+).

It belongs to the class-II aminoacyl-tRNA synthetase family. Zn(2+) is required as a cofactor.

It localises to the cytoplasm. It carries out the reaction tRNA(Ala) + L-alanine + ATP = L-alanyl-tRNA(Ala) + AMP + diphosphate. Its function is as follows. Catalyzes the attachment of alanine to tRNA(Ala) in a two-step reaction: alanine is first activated by ATP to form Ala-AMP and then transferred to the acceptor end of tRNA(Ala). Also edits incorrectly charged Ser-tRNA(Ala) and Gly-tRNA(Ala) via its editing domain. This is Alanine--tRNA ligase from Lactobacillus acidophilus (strain ATCC 700396 / NCK56 / N2 / NCFM).